We begin with the raw amino-acid sequence, 248 residues long: Membrane-spanning 4-domains subfamily A member 6A (248 aa).

At 1–46 (MTSQPVPNETIIVLPSNVINFSQAEKPEPTNQGQDSLKKHLHAEIK) the chain is on the cytoplasmic side. Residues 47-67 (VIGTIQILCGMMVLSLGIILA) form a helical membrane-spanning segment. Residues 68–84 (SASFSPNFTQVTSTLLN) are Extracellular-facing. Residues 85 to 105 (SAYPFIGPFFFIISGSLSIAT) traverse the membrane as a helical segment. Topologically, residues 106 to 116 (EKRLTKLLVHS) are cytoplasmic. Residues 117-137 (SLVGSILSALSALVGFIILSV) form a helical membrane-spanning segment. Topologically, residues 138–185 (KQATLNPASLQCELDKNNIPTRSYVSYFYHDSLYTTDCYTAKASLAGT) are extracellular. Residues 186–206 (LSLMLICTLLEFCLAVLTAVL) form a helical membrane-spanning segment. Residues 207-248 (RWKQAYSDFPGSVLFLPHSYIGNSGMSSKMTHDCGYEELLTS) are Cytoplasmic-facing.

Belongs to the MS4A family. As to expression, variable expression in some B-cell, myelomonocytic, and erythroleukemia cell lines.

The protein resides in the membrane. Functionally, may be involved in signal transduction as a component of a multimeric receptor complex. The polypeptide is Membrane-spanning 4-domains subfamily A member 6A (MS4A6A) (Homo sapiens (Human)).